Consider the following 374-residue polypeptide: Peptide chain release factor 2 (374 aa).

Residue Gln-254 is modified to N5-methylglutamine.

The protein belongs to the prokaryotic/mitochondrial release factor family. In terms of processing, methylated by PrmC. Methylation increases the termination efficiency of RF2.

Its subcellular location is the cytoplasm. In terms of biological role, peptide chain release factor 2 directs the termination of translation in response to the peptide chain termination codons UGA and UAA. This Renibacterium salmoninarum (strain ATCC 33209 / DSM 20767 / JCM 11484 / NBRC 15589 / NCIMB 2235) protein is Peptide chain release factor 2.